The sequence spans 100 residues: Small ribosomal subunit protein uS14 (100 aa).

It belongs to the universal ribosomal protein uS14 family. In terms of assembly, part of the 30S ribosomal subunit. Contacts proteins S3 and S10.

Its function is as follows. Binds 16S rRNA, required for the assembly of 30S particles and may also be responsible for determining the conformation of the 16S rRNA at the A site. This is Small ribosomal subunit protein uS14 from Trichodesmium erythraeum (strain IMS101).